A 188-amino-acid polypeptide reads, in one-letter code: Ion-translocating oxidoreductase complex subunit B (188 aa).

The hydrophobic stretch occupies residues 1–26; the sequence is MNGVLLAIGVLLPICLASGALLGYAA. The 4Fe-4S domain occupies 32-90; it reads QGDPVAERVNALLPQTQCGQCGYPGCKPYAEAIAAGDRINKCPPGGEATIQALADLLDL. C49, C52, C57, C73, C113, C116, C119, C123, C143, C146, C149, and C153 together coordinate [4Fe-4S] cluster. 2 4Fe-4S ferredoxin-type domains span residues 104-133 and 134-163; these read RVAYIREAECIGCTKCIQACPVDAIVGAAR and LMHTVIADECTGCDLCLEPCPVDCIEMREI.

The protein belongs to the 4Fe4S bacterial-type ferredoxin family. RnfB subfamily. In terms of assembly, the complex is composed of six subunits: RnfA, RnfB, RnfC, RnfD, RnfE and RnfG. [4Fe-4S] cluster is required as a cofactor.

It is found in the cell inner membrane. In terms of biological role, part of a membrane-bound complex that couples electron transfer with translocation of ions across the membrane. This Pseudomonas paraeruginosa (strain DSM 24068 / PA7) (Pseudomonas aeruginosa (strain PA7)) protein is Ion-translocating oxidoreductase complex subunit B.